The following is a 727-amino-acid chain: Catalase-peroxidase (727 aa).

The disordered stretch occupies residues 1–24 (MDQKSDSAGKCPVAHTAPRGRSNR). The tryptophyl-tyrosyl-methioninium (Trp-Tyr) (with M-243) cross-link spans 95 to 217 (WHSAGTYRIT…LAAVQMGLIY (123 aa)). H96 (proton acceptor) is an active-site residue. The segment at residues 217 to 243 (YVNPEGPNGNPDPVAAARDIRETFARM) is a cross-link (tryptophyl-tyrosyl-methioninium (Tyr-Met) (with W-95)). A heme b-binding site is contributed by H258.

Belongs to the peroxidase family. Peroxidase/catalase subfamily. Homodimer or homotetramer. Requires heme b as cofactor. Formation of the three residue Trp-Tyr-Met cross-link is important for the catalase, but not the peroxidase activity of the enzyme.

It carries out the reaction H2O2 + AH2 = A + 2 H2O. The catalysed reaction is 2 H2O2 = O2 + 2 H2O. In terms of biological role, bifunctional enzyme with both catalase and broad-spectrum peroxidase activity. This chain is Catalase-peroxidase, found in Rhizobium meliloti (strain 1021) (Ensifer meliloti).